The sequence spans 512 residues: Multidrug resistance protein 3 (512 aa).

14 helical membrane passes run 13–33 (FVVL…TIVA), 48–68 (KFAW…PIYG), 79–99 (FFLF…IAQT), 109–129 (IQGI…FDLF), 139–159 (GMFG…GAII), 163–183 (ISWH…LFFI), 200–220 (WGGA…LELG), 228–248 (SIQI…FFIV), 272–292 (ILAF…PIFV), 304–324 (GFIL…GGIF), 333–353 (LMLI…NMTP), 358–378 (VWLT…FSLL), 399–421 (SFLR…TNVF), and 475–495 (ITYV…TILF).

The protein belongs to the major facilitator superfamily. EmrB family.

It localises to the cell membrane. Confers resistance to puromycin, tosufloxacin and norfloxacin. In Bacillus subtilis (strain 168), this protein is Multidrug resistance protein 3 (bmr3).